The primary structure comprises 815 residues: Protein-glutamine gamma-glutamyltransferase K (815 aa).

Residues 1–10 are compositionally biased toward basic and acidic residues; sequence MEGPRSDVGR. Disordered regions lie at residues 1 to 48 and 62 to 101; these read MEGP…SFWA and DDWG…AAGD. The span at 16–25 shows a compositional bias: pro residues; sequence WQPPTTPSPE. Phosphothreonine is present on Thr21. Ser23, Ser71, Ser83, Ser91, and Ser94 each carry phosphoserine. The span at 66–78 shows a compositional bias: low complexity; it reads PEPSGSRSRGTSS. The segment covering 79 to 91 has biased composition (basic and acidic residues); the sequence is RGRDSRGGRRPES. Catalysis depends on residues Cys376, His435, and Asp458. 4 residues coordinate Ca(2+): Asn498, Asp500, Glu547, and Glu552. The disordered stretch occupies residues 791-815; sequence GSGFSDAGGDSRSGENIPMAYRGGA. Ser803 carries the phosphoserine modification.

It belongs to the transglutaminase superfamily. Transglutaminase family. As to quaternary structure, interacts with PLAAT4. Requires Ca(2+) as cofactor. Tyrosine-phosphorylated. In terms of processing, palmitoylated. Post-translationally, the membrane anchorage region possesses a cluster of five cysteines within which fatty acid(s) may become thioester-linked. It is subject to phorbol ester-stimulated phosphorylation and is hypersensitive to proteolysis, which releases the enzyme in a soluble form. As to expression, expressed in large amounts in epithelial tissues (lung, liver and kidney).

The protein localises to the membrane. The enzyme catalyses L-glutaminyl-[protein] + L-lysyl-[protein] = [protein]-L-lysyl-N(6)-5-L-glutamyl-[protein] + NH4(+). Its function is as follows. Catalyzes the cross-linking of proteins and the conjugation of polyamines to proteins. Responsible for cross-linking epidermal proteins during formation of the stratum corneum. Involved in cell proliferation. This is Protein-glutamine gamma-glutamyltransferase K (Tgm1) from Mus musculus (Mouse).